A 995-amino-acid chain; its full sequence is MATKLLSLTCIRKERFSERYPLVRKHLTRSRDGGGGSSSETAAFEIDDPISRAVFQVLGMTCSACAGSVEKAIKRLPGIHDAVIDALNNRAQILFYPNSVDVETIRETIEDAGFEASLIENEANERSRQVCRIRINGMTCTSCSSTIERVLQSVNGVQRAHVALAIEEAEIHYDPRLSSYDRLLEEIENAGFEAVLISTGEDVSKIDLKIDGELTDESMKVIERSLEALPGVQSVEISHGTDKISVLYKPDVTGPRNFIQVIESTVFGHSGHIKATIFSEGGVGRESQKQGEIKQYYKSFLWSLVFTVPVFLTAMVFMYIPGIKDLLMFKVINMLTVGEIIRCVLATPVQFVIGWRFYTGSYKALRRGSANMDVLIALGTNAAYFYSLYTVLRAATSPDFKGVDFFETSAMLISFIILGKYLEVMAKGKTSQAIAKLMNLAPDTAILLSLDKEGNVTGEEEIDGRLIQKNDVIKIVPGAKVASDGYVIWGQSHVNESMITGEARPVAKRKGDTVIGGTLNENGVLHVKVTRVGSESALAQIVRLVESAQLAKAPVQKLADRISKFFVPLVIFLSFSTWLAWFLAGKLHWYPESWIPSSMDSFELALQFGISVMVIACPCALGLATPTAVMVGTGVGASQGVLIKGGQALERAHKVNCIVFDKTGTLTMGKPVVVKTKLLKNMVLREFYELVAATEVNSEHPLAKAIVEYAKKFRDDEENPAWPEACDFVSITGKGVKATVKGREIMVGNKNLMNDHKVIIPDDAEELLADSEDMAQTGILVSINSELIGVLSVSDPLKPSAREAISILKSMNIKSIMVTGDNWGTANSIAREVGIDSVIAEAKPEQKAEKVKELQAAGHVVAMVGDGINDSPALVAADVGMAIGAGTDIAIEAADIVLMKSNLEDVITAIDLSRKTFSRIRLNYVWALGYNLMGIPIAAGVLFPGTRFRLPPWIAGAAMAASSVSVVCCSLLLKNYKRPKKLDHLEIREIQVERV.

The Cytoplasmic segment spans residues 1–299; it reads MATKLLSLTC…QGEIKQYYKS (299 aa). HMA domains follow at residues 51-117 and 129-195; these read SRAV…FEAS and QVCR…FEAV. The Cu(+) site is built by cysteine 62, cysteine 65, cysteine 140, and cysteine 143. One can recognise an HMA 3; degenerate domain in the interval 204–270; the sequence is SKIDLKIDGE…VIESTVFGHS (67 aa). The helical transmembrane segment at 300-321 threads the bilayer; the sequence is FLWSLVFTVPVFLTAMVFMYIP. Topologically, residues 322–340 are extracellular; that stretch reads GIKDLLMFKVINMLTVGEI. A helical transmembrane segment spans residues 341-360; it reads IRCVLATPVQFVIGWRFYTG. At 361 to 367 the chain is on the cytoplasmic side; the sequence is SYKALRR. The chain crosses the membrane as a helical span at residues 368 to 388; it reads GSANMDVLIALGTNAAYFYSL. Topologically, residues 389-406 are extracellular; it reads YTVLRAATSPDFKGVDFF. A helical transmembrane segment spans residues 407–427; sequence ETSAMLISFIILGKYLEVMAK. Over 428 to 561 the chain is Cytoplasmic; it reads GKTSQAIAKL…KAPVQKLADR (134 aa). The chain crosses the membrane as a helical span at residues 562 to 584; it reads ISKFFVPLVIFLSFSTWLAWFLA. Topologically, residues 585–605 are extracellular; it reads GKLHWYPESWIPSSMDSFELA. The helical transmembrane segment at 606–623 threads the bilayer; it reads LQFGISVMVIACPCALGL. Residues 624-920 lie on the Cytoplasmic side of the membrane; the sequence is ATPTAVMVGT…DLSRKTFSRI (297 aa). The active-site 4-aspartylphosphate intermediate is the aspartate 661. Aspartate 866 and aspartate 870 together coordinate Mg(2+). The helical transmembrane segment at 921-940 threads the bilayer; sequence RLNYVWALGYNLMGIPIAAG. The Extracellular segment spans residues 941–952; that stretch reads VLFPGTRFRLPP. The chain crosses the membrane as a helical span at residues 953 to 971; sequence WIAGAAMAASSVSVVCCSL. At 972 to 995 the chain is on the cytoplasmic side; that stretch reads LLKNYKRPKKLDHLEIREIQVERV.

Belongs to the cation transport ATPase (P-type) (TC 3.A.3) family. Type IB subfamily. In terms of assembly, interacts with ATX1. As to expression, expressed in roots and flowers.

The protein resides in the membrane. It carries out the reaction Cu(+)(in) + ATP + H2O = Cu(+)(out) + ADP + phosphate + H(+). Its function is as follows. Involved in copper import into the cell. May play a role in copper detoxification in roots. The protein is Probable copper-transporting ATPase HMA5 (HMA5) of Arabidopsis thaliana (Mouse-ear cress).